We begin with the raw amino-acid sequence, 236 residues long: Orotidine 5'-phosphate decarboxylase (236 aa).

Residues Asp-14, Lys-36, Asp-63–Thr-72, Thr-122, Arg-183, Gln-192, Gly-212, and Arg-213 each bind substrate. Lys-65 acts as the Proton donor in catalysis.

It belongs to the OMP decarboxylase family. Type 1 subfamily. In terms of assembly, homodimer.

The enzyme catalyses orotidine 5'-phosphate + H(+) = UMP + CO2. It participates in pyrimidine metabolism; UMP biosynthesis via de novo pathway; UMP from orotate: step 2/2. In terms of biological role, catalyzes the decarboxylation of orotidine 5'-monophosphate (OMP) to uridine 5'-monophosphate (UMP). The sequence is that of Orotidine 5'-phosphate decarboxylase from Chromohalobacter salexigens (strain ATCC BAA-138 / DSM 3043 / CIP 106854 / NCIMB 13768 / 1H11).